Reading from the N-terminus, the 272-residue chain is Imidazole glycerol phosphate synthase subunit HisF (272 aa).

Active-site residues include Asp11 and Asp130.

Belongs to the HisA/HisF family. As to quaternary structure, heterodimer of HisH and HisF.

The protein resides in the cytoplasm. The enzyme catalyses 5-[(5-phospho-1-deoxy-D-ribulos-1-ylimino)methylamino]-1-(5-phospho-beta-D-ribosyl)imidazole-4-carboxamide + L-glutamine = D-erythro-1-(imidazol-4-yl)glycerol 3-phosphate + 5-amino-1-(5-phospho-beta-D-ribosyl)imidazole-4-carboxamide + L-glutamate + H(+). The protein operates within amino-acid biosynthesis; L-histidine biosynthesis; L-histidine from 5-phospho-alpha-D-ribose 1-diphosphate: step 5/9. Functionally, IGPS catalyzes the conversion of PRFAR and glutamine to IGP, AICAR and glutamate. The HisF subunit catalyzes the cyclization activity that produces IGP and AICAR from PRFAR using the ammonia provided by the HisH subunit. The protein is Imidazole glycerol phosphate synthase subunit HisF of Methanococcus maripaludis (strain C7 / ATCC BAA-1331).